The chain runs to 412 residues: Probable serine/threonine-protein kinase PBL4 (412 aa).

Residue Gly2 is the site of N-myristoyl glycine attachment. The S-palmitoyl cysteine moiety is linked to residue Cys4. The disordered stretch occupies residues 14 to 40 (RESPYRGSSRISAKRSQSSRLSSLTIQ). Low complexity predominate over residues 21-40 (SSRISAKRSQSSRLSSLTIQ). Thr72 carries the phosphothreonine modification. The Protein kinase domain occupies 83–369 (FRPDSVIGEG…STLEELEMTL (287 aa)). ATP-binding positions include 89–97 (IGEGGFGYV) and Lys121. Tyr167 is subject to Phosphotyrosine. Catalysis depends on Asp215, which acts as the Proton acceptor. Ser219 and Ser249 each carry phosphoserine. A phosphothreonine mark is found at Thr250 and Thr255. Position 263 is a phosphotyrosine (Tyr263).

Belongs to the protein kinase superfamily. Ser/Thr protein kinase family.

The protein localises to the cell membrane. The catalysed reaction is L-seryl-[protein] + ATP = O-phospho-L-seryl-[protein] + ADP + H(+). It carries out the reaction L-threonyl-[protein] + ATP = O-phospho-L-threonyl-[protein] + ADP + H(+). May be involved in plant defense signaling. The protein is Probable serine/threonine-protein kinase PBL4 of Arabidopsis thaliana (Mouse-ear cress).